Consider the following 125-residue polypeptide: Small ribosomal subunit protein bS6 (125 aa).

Belongs to the bacterial ribosomal protein bS6 family.

In terms of biological role, binds together with bS18 to 16S ribosomal RNA. The sequence is that of Small ribosomal subunit protein bS6 from Campylobacter jejuni (strain RM1221).